Reading from the N-terminus, the 397-residue chain is Cysteine desulfurase IscS (397 aa).

Pyridoxal 5'-phosphate-binding positions include 72 to 73 (GS), asparagine 152, glutamine 180, and 200 to 202 (SAH). The residue at position 203 (lysine 203) is an N6-(pyridoxal phosphate)lysine. Position 238 (threonine 238) interacts with pyridoxal 5'-phosphate. Catalysis depends on cysteine 328, which acts as the Cysteine persulfide intermediate. Cysteine 328 lines the [2Fe-2S] cluster pocket.

The protein belongs to the class-V pyridoxal-phosphate-dependent aminotransferase family. NifS/IscS subfamily. In terms of assembly, homodimer. Forms a heterotetramer with IscU, interacts with other sulfur acceptors. Requires pyridoxal 5'-phosphate as cofactor.

The protein localises to the cytoplasm. The catalysed reaction is (sulfur carrier)-H + L-cysteine = (sulfur carrier)-SH + L-alanine. It participates in cofactor biosynthesis; iron-sulfur cluster biosynthesis. In terms of biological role, master enzyme that delivers sulfur to a number of partners involved in Fe-S cluster assembly, tRNA modification or cofactor biosynthesis. Catalyzes the removal of elemental sulfur atoms from cysteine to produce alanine. Functions as a sulfur delivery protein for Fe-S cluster synthesis onto IscU, an Fe-S scaffold assembly protein, as well as other S acceptor proteins. This chain is Cysteine desulfurase IscS, found in Clostridium botulinum (strain ATCC 19397 / Type A).